Reading from the N-terminus, the 391-residue chain is uncharacterized protein (391 aa).

WD repeat units lie at residues 137–179 (VNDI…PILA) and 182–222 (PLSS…SAEE).

It is found in the cytoplasm. Its subcellular location is the nucleus. This is an uncharacterized protein from Schizosaccharomyces pombe (strain 972 / ATCC 24843) (Fission yeast).